Consider the following 248-residue polypeptide: Ureidoacrylate amidohydrolase RutB (248 aa).

Residue Asp41 is the Proton acceptor of the active site. Lys150 is an active-site residue. Cys183 functions as the Nucleophile in the catalytic mechanism.

It belongs to the isochorismatase family. RutB subfamily.

The catalysed reaction is (Z)-3-ureidoacrylate + H2O + H(+) = (Z)-3-aminoacrylate + NH4(+) + CO2. It catalyses the reaction (Z)-3-ureidoacrylate + H2O = (Z)-3-aminoacrylate + carbamate + H(+). It carries out the reaction (Z)-2-methylureidoacrylate + H2O + H(+) = (Z)-2-methylaminoacrylate + NH4(+) + CO2. Its function is as follows. Hydrolyzes ureidoacrylate to form aminoacrylate and carbamate. The carbamate hydrolyzes spontaneously, thereby releasing one of the nitrogen atoms of the pyrimidine ring as ammonia and one of its carbon atoms as CO2. The protein is Ureidoacrylate amidohydrolase RutB of Methylorubrum extorquens (strain ATCC 14718 / DSM 1338 / JCM 2805 / NCIMB 9133 / AM1) (Methylobacterium extorquens).